A 452-amino-acid polypeptide reads, in one-letter code: Pup--protein ligase (452 aa).

Residue glutamate 9 coordinates Mg(2+). Arginine 53 serves as a coordination point for ATP. Tyrosine 55 contributes to the Mg(2+) binding site. The active-site Proton acceptor is the aspartate 57. A Mg(2+)-binding site is contributed by glutamate 63. 2 residues coordinate ATP: threonine 66 and tryptophan 419.

It belongs to the Pup ligase/Pup deamidase family. Pup-conjugating enzyme subfamily.

It carries out the reaction ATP + [prokaryotic ubiquitin-like protein]-L-glutamate + [protein]-L-lysine = ADP + phosphate + N(6)-([prokaryotic ubiquitin-like protein]-gamma-L-glutamyl)-[protein]-L-lysine.. It participates in protein degradation; proteasomal Pup-dependent pathway. The protein operates within protein modification; protein pupylation. Catalyzes the covalent attachment of the prokaryotic ubiquitin-like protein modifier Pup to the proteasomal substrate proteins, thereby targeting them for proteasomal degradation. This tagging system is termed pupylation. The ligation reaction involves the side-chain carboxylate of the C-terminal glutamate of Pup and the side-chain amino group of a substrate lysine. The protein is Pup--protein ligase of Geodermatophilus obscurus (strain ATCC 25078 / DSM 43160 / JCM 3152 / CCUG 61914 / KCC A-0152 / KCTC 9177 / NBRC 13315 / NRRL B-3577 / G-20).